We begin with the raw amino-acid sequence, 351 residues long: MVSFSEITTLGVGGSIACFIECSPDEFVERAPGLFRPGHHVLVVGGGSNLVASDCPFPGTVVRLKSRDTIISDDGNYTRFSVSAGTSWDDLVSYTLDLGFDQLSPMSGIPGTFGGALAQNISAYGAAVRDVLGSVEVYDACTSEVVTFGLEDMRYGYRTSALKNVRNKVILGGTLLLKPGPTPVLYRQLANALKVDLGTYCSGKQVRDQVLRIRAEKGMLPRYLVPKGFDVCNTSSVGSFFVNPIVSKEHLSRLRRLVPQGALNSSVIQTDEMGGVKVSAAFLLEQSGFEKGFCISGSQAAISTQHSLAIVNRGGATAAEVIELAGLITRTVSRKFDIHLIPEPVFVGLEL.

Residues 11–213 (GVGGSIACFI…KQVRDQVLRI (203 aa)) enclose the FAD-binding PCMH-type domain. The active site involves R158. Catalysis depends on S239, which acts as the Proton donor. Residue E343 is part of the active site.

Belongs to the MurB family. The cofactor is FAD.

It is found in the cytoplasm. It carries out the reaction UDP-N-acetyl-alpha-D-muramate + NADP(+) = UDP-N-acetyl-3-O-(1-carboxyvinyl)-alpha-D-glucosamine + NADPH + H(+). It functions in the pathway cell wall biogenesis; peptidoglycan biosynthesis. Its function is as follows. Cell wall formation. This chain is UDP-N-acetylenolpyruvoylglucosamine reductase, found in Tropheryma whipplei (strain TW08/27) (Whipple's bacillus).